The chain runs to 281 residues: tRNA pseudouridine synthase A (281 aa).

D55 (nucleophile) is an active-site residue. Y110 is a binding site for substrate.

This sequence belongs to the tRNA pseudouridine synthase TruA family.

The enzyme catalyses uridine(38/39/40) in tRNA = pseudouridine(38/39/40) in tRNA. Functionally, formation of pseudouridine at positions 38, 39 and 40 in the anticodon stem and loop of transfer RNAs. This is tRNA pseudouridine synthase A from Methanocorpusculum labreanum (strain ATCC 43576 / DSM 4855 / Z).